The sequence spans 687 residues: Follicle-stimulating hormone receptor (687 aa).

An N-terminal signal peptide occupies residues 1-17 (MALLLVSLLAFLSLGSG). An LRRNT domain is found at 18–46 (CHHQVCHYSNRVFLCQESKVTEIPSDLPR). Residues 18-358 (CHHQVCHYSN…EDIMGYDILR (341 aa)) lie on the Extracellular side of the membrane. A disulfide bridge links Cys23 with Cys32. LRR repeat units lie at residues 49 to 72 (LELR…FGDL), 73 to 97 (KKIE…LPKL), 98 to 118 (HEIR…AFQN), 119 to 143 (LPNL…KIQS), 144 to 169 (LQKV…MGLS), 170 to 192 (FESM…AFNG), 193 to 216 (TQLD…VFQG), 217 to 240 (ASGP…GLEN), and 241 to 259 (LKKL…PSLE). N-linked (GlcNAc...) asparagine glycosylation is found at Asn191 and Asn199. Intrachain disulfides connect Cys275/Cys338, Cys276/Cys292, Cys276/Cys348, and Cys292/Cys330. An N-linked (GlcNAc...) asparagine glycan is attached at Asn293. At Tyr327 the chain carries Sulfotyrosine. The helical transmembrane segment at 359 to 379 (VLIWFISILAITGNIIVLVIL) threads the bilayer. Over 380–390 (ITSQYKLTVPR) the chain is Cytoplasmic. A helical transmembrane segment spans residues 391 to 413 (FLMCNLAFADLCIGIYLLLIASV). At 414-435 (DIHTKSQYHNYAIDWQTGAGCD) the chain is on the extracellular side. A disulfide bridge links Cys434 with Cys509. The chain crosses the membrane as a helical span at residues 436 to 457 (AAGFFTVFGSELSVYTLTAITL). Over 458 to 477 (ERWHTITHAMQLECKVQLRH) the chain is Cytoplasmic. A helical membrane pass occupies residues 478–500 (AASVMLVGWIFGFGVGLLPIFGI). Residues 501 to 520 (STYMKVSICLPMDIDSPLSQ) lie on the Extracellular side of the membrane. The helical transmembrane segment at 521 to 542 (LYVMSLLVLNVLAFVVICGCYT) threads the bilayer. Over 543–565 (HIYLTVRNPNIVSSSSDTKIAKR) the chain is Cytoplasmic. Residues 566–589 (MGILIFTDFLCMAPISFFGISASL) traverse the membrane as a helical segment. The Extracellular segment spans residues 590–600 (KVALITVSKSK). A helical transmembrane segment spans residues 601–622 (ILLVLFYPINSCANPFLYAIFT). Over 623-687 (KNFRRDFFIL…LVPLSHLAQN (65 aa)) the chain is Cytoplasmic.

This sequence belongs to the G-protein coupled receptor 1 family. FSH/LSH/TSH subfamily. In terms of assembly, homotrimer. Functions as a homotrimer binding the FSH hormone heterodimer composed of CGA and FSHB. Interacts with ARRB2. Interacts with APPL2; interaction is independent of follicle stimulating hormone stimulation. Post-translationally, N-glycosylated; indirectly required for FSH-binding, possibly via a conformational change that allows high affinity binding of hormone. Sulfated.

The protein resides in the cell membrane. G protein-coupled receptor for follitropin, the follicle-stimulating hormone. Through cAMP production activates the downstream PI3K-AKT and ERK1/ERK2 signaling pathways. The sequence is that of Follicle-stimulating hormone receptor (FSHR) from Equus asinus (Donkey).